Here is a 410-residue protein sequence, read N- to C-terminus: Acetyltransferase aurG (410 aa).

Helical transmembrane passes span 3 to 23 (LWLV…VVCF), 28 to 48 (SLVR…GLIL), and 59 to 79 (WSLV…VGLI). The span at 90 to 99 (TSSRGGQPNA) shows a compositional bias: polar residues. Residues 90 to 112 (TSSRGGQPNASLDLAGRKKPPSS) are disordered. Residue N98 is glycosylated (N-linked (GlcNAc...) asparagine). A run of 4 helical transmembrane segments spans residues 157–177 (AMTL…GGDL), 219–239 (MYFS…MVGL), 300–320 (ILAT…YSYG), and 364–384 (IGYV…FFPL).

The protein belongs to the wax synthase family.

It localises to the membrane. Its pathway is polyketide biosynthesis. In terms of biological role, acetyltransferase; part of the gene cluster that mediates the biosynthesis of aurovertins, fungal polyketides that exhibit potent inhibition of adenosine triphosphate synthase. Tha biosynthesis starts with the HR-PKS aurA that selects propionate as the starter unit; synthesizes a hexa-ene chain through the repeated functions of the KR and DH domains in the first six iterations; selectively introduces three alpha-methyl substitutions at C4, C6, and C16 using the S-adensylmethionine-dependent cMET; and shuts off KR and DH in the last three iterations to afford a 1,3,5-triketo portion that can undergo intramolecular cyclization to yield the alpha-pyrone intermediate. AurE may act as a cyclase and enhances the rate of pyrone formation and product release of aurA. The methyltransferase aurB then methylates the C17 hydroxyl group. C17 methylation is required to initiate epoxidation by the downstream monooxygenase aurC. The monooxygenase aurC and the epoxide hydrolase aurD can iteratively transform the terminal triene portion of the methylated precursor into the dioxabicyclo[3.2.1]octane scaffold of aurovertin E. Epoxidation modifications of the precursor occur in two separate steps; bis-epoxidation of the two terminal olefins takes place first, followed by another epoxidation that occurs at C7-C8 after tetrahydrofuran formation. The O-acyltransferase aurG converts aurovertin E to aurovertin A. This chain is Acetyltransferase aurG, found in Calcarisporium arbuscula (Dendryphion arbuscula).